Reading from the N-terminus, the 327-residue chain is Interleukin-12 subunit beta (327 aa).

A signal peptide spans 1 to 22 (MHPQQLVVSWFSLVLLASPIVA). Residues 23–106 (IWELEKNVYV…LSRSLLLLHK (84 aa)) form the Ig-like C2-type domain. The cysteines at positions 50 and 90 are disulfide-linked. A glycan (N-linked (GlcNAc...) asparagine) is linked at Asn-223. Residues 238 to 327 (PPKNLQLRPL…WSEWASVSCS (90 aa)) enclose the Fibronectin type-III domain.

The protein belongs to the IL-12B family. In terms of assembly, heterodimer with IL12A; disulfide-linked. The heterodimer is known as interleukin IL-12. Heterodimer with IL23A; disulfide-linked. The heterodimer is known as interleukin IL-23. Also secreted as a monomer. Interacts with NBR1; this interaction promotes IL-12 secretion.

It is found in the secreted. Its function is as follows. Cytokine that can act as a growth factor for activated T and NK cells, enhance the lytic activity of NK/lymphokine-activated killer cells, and stimulate the production of IFN-gamma by resting PBMC. In terms of biological role, associates with IL23A to form the IL-23 interleukin, a heterodimeric cytokine which functions in innate and adaptive immunity. IL-23 may constitute with IL-17 an acute response to infection in peripheral tissues. IL-23 binds to a heterodimeric receptor complex composed of IL12RB1 and IL23R, activates the Jak-Stat signaling cascade, stimulates memory rather than naive T-cells and promotes production of pro-inflammatory cytokines. IL-23 induces autoimmune inflammation and thus may be responsible for autoimmune inflammatory diseases and may be important for tumorigenesis. In Capra hircus (Goat), this protein is Interleukin-12 subunit beta (IL12B).